The primary structure comprises 316 residues: MASKSRHYLNQPWYIILFIFVLSLIAGTLLSSVYYVLAPIQQQAAEFDRNQQMLMAAQVISSDNTFQVYEKGDWHPALYNTKKQLLEISSTPPKVTVTTLSSYFQNFVRVLLTDTQGNLSSFEDHNLNLEEFLSQPTPVIHGLALYVVYAILHNDAASSKLSASQVAKNPTAIESIVLPIEGFGLWGPIYGFLALEKDGNTVLGTSWYQHGETPGLGANIANPQWQKNFRGKKVFLVSASGETDFAKTTLGLEVIKGSVSAALGDSPKAASSIDGISGATLTCNGVTESFSHSLAPYRALLTFFANSKPSGESHDH.

A helical transmembrane segment spans residues 13–33 (WYIILFIFVLSLIAGTLLSSV). Residue threonine 280 is modified to FMN phosphoryl threonine.

It belongs to the NqrC family. As to quaternary structure, composed of six subunits; NqrA, NqrB, NqrC, NqrD, NqrE and NqrF. FMN serves as cofactor.

It is found in the cell inner membrane. The catalysed reaction is a ubiquinone + n Na(+)(in) + NADH + H(+) = a ubiquinol + n Na(+)(out) + NAD(+). In terms of biological role, NQR complex catalyzes the reduction of ubiquinone-1 to ubiquinol by two successive reactions, coupled with the transport of Na(+) ions from the cytoplasm to the periplasm. NqrA to NqrE are probably involved in the second step, the conversion of ubisemiquinone to ubiquinol. The polypeptide is Na(+)-translocating NADH-quinone reductase subunit C (Chlamydia trachomatis serovar D (strain ATCC VR-885 / DSM 19411 / UW-3/Cx)).